Here is a 137-residue protein sequence, read N- to C-terminus: Large ribosomal subunit protein uL16c (137 aa).

This sequence belongs to the universal ribosomal protein uL16 family. As to quaternary structure, part of the 50S ribosomal subunit.

Its subcellular location is the plastid. It localises to the chloroplast. The sequence is that of Large ribosomal subunit protein uL16c from Vigna unguiculata (Cowpea).